The chain runs to 185 residues: Putative lipoprotein LprB (185 aa).

The first 24 residues, 1 to 24, serve as a signal peptide directing secretion; sequence MRRKVRRLTLAVSALVALFPAVAG. The N-palmitoyl cysteine moiety is linked to residue Cys25. Cys25 carries S-diacylglycerol cysteine lipidation. The interval 26 to 50 is disordered; that stretch reads SDSGDNKPGATIPSTPANAEGRHGP.

The protein resides in the cell membrane. This chain is Putative lipoprotein LprB (lprB), found in Mycobacterium bovis (strain ATCC BAA-935 / AF2122/97).